The primary structure comprises 375 residues: Thioredoxin reductase 1, mitochondrial (375 aa).

The N-terminal 37 residues, 1–37 (MNCVSRLKCLISKARSFARLGGESTLSQPPSLASAAF), are a transit peptide targeting the mitochondrion. FAD contacts are provided by residues 58–61 (SGPA), 79–80 (FE), 87–92 (IAPGGQ), Asn-101, Val-134, Cys-192, Asp-337, and 344–346 (RQA). Cys-189 and Cys-192 are disulfide-bonded.

This sequence belongs to the class-II pyridine nucleotide-disulfide oxidoreductase family. In terms of assembly, homodimer. FAD serves as cofactor. Ubiquitous.

It is found in the cytoplasm. The protein resides in the mitochondrion. It catalyses the reaction [thioredoxin]-dithiol + NADP(+) = [thioredoxin]-disulfide + NADPH + H(+). Functionally, NADPH-dependent thioredoxin-disulfide reductase that reduces thioredoxins O1, O2 and F3. This is Thioredoxin reductase 1, mitochondrial (NTR1) from Arabidopsis thaliana (Mouse-ear cress).